A 429-amino-acid chain; its full sequence is Histidinol dehydrogenase (429 aa).

The NAD(+) site is built by Y130, Q191, and N214. Substrate contacts are provided by S237, Q259, and H262. Zn(2+) contacts are provided by Q259 and H262. Residues E327 and H328 each act as proton acceptor in the active site. Positions 328, 361, 415, and 420 each coordinate substrate. D361 lines the Zn(2+) pocket. H420 is a Zn(2+) binding site.

Belongs to the histidinol dehydrogenase family. Requires Zn(2+) as cofactor.

It catalyses the reaction L-histidinol + 2 NAD(+) + H2O = L-histidine + 2 NADH + 3 H(+). It functions in the pathway amino-acid biosynthesis; L-histidine biosynthesis; L-histidine from 5-phospho-alpha-D-ribose 1-diphosphate: step 9/9. In terms of biological role, catalyzes the sequential NAD-dependent oxidations of L-histidinol to L-histidinaldehyde and then to L-histidine. This is Histidinol dehydrogenase from Neisseria gonorrhoeae (strain ATCC 700825 / FA 1090).